The following is a 538-amino-acid chain: CTP synthase (538 aa).

Residues 1 to 266 (MRTKYIFITG…DQKIVDLLNI (266 aa)) form an amidoligase domain region. S14 contacts CTP. S14 provides a ligand contact to UTP. ATP is bound by residues 15–20 (SLGKGL) and D72. Positions 72 and 140 each coordinate Mg(2+). Residues 147–149 (DIE), 187–192 (KTKPTQ), and K223 contribute to the CTP site. UTP-binding positions include 187-192 (KTKPTQ) and K223. Residue 239 to 241 (KDV) coordinates ATP. Residues 291–533 (NIAIVGKYVN…IEAALRYRKK (243 aa)) form the Glutamine amidotransferase type-1 domain. G353 serves as a coordination point for L-glutamine. The active-site Nucleophile; for glutamine hydrolysis is C380. L-glutamine contacts are provided by residues 381–384 (LGMQ), E404, and R461. Active-site residues include H506 and E508.

The protein belongs to the CTP synthase family. As to quaternary structure, homotetramer.

It carries out the reaction UTP + L-glutamine + ATP + H2O = CTP + L-glutamate + ADP + phosphate + 2 H(+). The catalysed reaction is L-glutamine + H2O = L-glutamate + NH4(+). It catalyses the reaction UTP + NH4(+) + ATP = CTP + ADP + phosphate + 2 H(+). It participates in pyrimidine metabolism; CTP biosynthesis via de novo pathway; CTP from UDP: step 2/2. Allosterically activated by GTP, when glutamine is the substrate; GTP has no effect on the reaction when ammonia is the substrate. The allosteric effector GTP functions by stabilizing the protein conformation that binds the tetrahedral intermediate(s) formed during glutamine hydrolysis. Inhibited by the product CTP, via allosteric rather than competitive inhibition. Functionally, catalyzes the ATP-dependent amination of UTP to CTP with either L-glutamine or ammonia as the source of nitrogen. Regulates intracellular CTP levels through interactions with the four ribonucleotide triphosphates. This Syntrophus aciditrophicus (strain SB) protein is CTP synthase.